The chain runs to 467 residues: Calcium-binding protein P (467 aa).

Composition is skewed to pro residues over residues 1–10 (MQNPQNPPPA) and 45–62 (QYPP…PPYP). Residues 1 to 311 (MQNPQNPPPA…GAYPGQPPMG (311 aa)) are disordered. The short motif at 45–49 (QYPPQ) is the XYPPX element. Residues 63 to 74 (GTQQPGAPGAPG) show a composition bias toward low complexity. 17 short sequence motifs (XYPPX) span residues 75 to 79 (QYPPQ), 83 to 87 (QYPPQ), 94 to 98 (QYPPQ), 104 to 108 (GYPPQ), 115 to 119 (QYPPQ), 125 to 129 (GYPPQ), 136 to 140 (QYPPQ), 146 to 150 (QYPPQ), 157 to 161 (QYPPQ), 165 to 169 (QYPPQ), 176 to 180 (AYPPQ), 187 to 191 (AYPPQ), 221 to 225 (GVPPQ), 238 to 242 (AYPPQ), 247 to 251 (AYPPQ), 256 to 260 (AYPPQ), and 275 to 279 (AYPPQ). Pro residues-rich tracts occupy residues 75 to 109 (QYPP…PPQQ) and 118 to 131 (PQQP…PQQP). Residues 132–145 (GAPGQYPPQQGQPG) are compositionally biased toward low complexity. Low complexity-rich tracts occupy residues 153 to 193 (GQPG…PQQG) and 215 to 246 (AYPG…GQPG). Residues 253 to 311 (QPGAYPPQQQQVAYPGQQPPMGAYPPQQGAYPGQQGAYPGQQGAYPGQQGAYPGQPPMG) show a composition bias toward low complexity. EF-hand domains are found at residues 399-434 (QKMM…LGYY) and 435-467 (FSKG…WSMQ). Ca(2+) contacts are provided by D412, N414, S416, T418, and E423.

This chain is Calcium-binding protein P (cbpP), found in Dictyostelium discoideum (Social amoeba).